Here is a 531-residue protein sequence, read N- to C-terminus: MRLNLISFFIIFTILVSISNSQEFRSYTGEGNNKQNPKQGSIFTPFIRLANPIKFNKNGFPNITNQPSRAISNIIFDQQTHIGSKEHLTDMFNMWGQFLIHNMALSKPEPNSWPIKVPKCDQYFDPACIGNKTMNYFRTRATEVPCDVGKTVVDEDGKCYEQINSLGSYIDGNVLYGNSEEICKNLRSLSGGEMKMTVTDVGDLPPKNVPGVPMDNDANLFPIDQLYSVGERRGNENPGLLSIHTLLLRDHNRLARKFARLHPEWDDERVFQQSRSCIIEQIQKITYDEYLPTTLGSFPSYTGYDANVNAQVSNEFTTTAFRFGHSEVGPFMEYYSENGTRLQPLPIKFSYFNPHALNRGVEPLIRGLIINEEENIDIYMISDLRNFLFGKPGQGGLDLASRNLQRNRDHGIPPYNSLRRQLGLRPVQTWSDITSDPQIQNRLKNAYKSVDDIDSYVGGLAEDHMEGSCVGQTFYLIIYEQFFRTRAGDRFWYETPEMRMVNRECETTTFAEVIKRTTSNIGYVQPNVFRK.

An N-terminal signal peptide occupies residues 1-21 (MRLNLISFFIIFTILVSISNS). Asparagine 62 carries an N-linked (GlcNAc...) asparagine glycan. Histidine 101 functions as the Proton acceptor in the catalytic mechanism. N-linked (GlcNAc...) asparagine glycans are attached at residues asparagine 131 and asparagine 338.

The protein belongs to the peroxidase family.

It localises to the secreted. It catalyses the reaction 2 a phenolic donor + H2O2 = 2 a phenolic radical donor + 2 H2O. The protein is Peroxinectin A (poxA) of Dictyostelium discoideum (Social amoeba).